The following is a 508-amino-acid chain: MDEFHXYGKEDSSWQQCFLYPLFFQEDLYAIYHDHYLDGSSSSESMEHLSSNDQFSFLTVKRLIGQIRQQNNSIVFFLNCDPNPLVDRNKSFYYESVLEGLTLVLEVPFSIRSKYSVEGMNEWKSFRSIHSIFPFLEDKFPHSNYILDTRIPYSIHPEILVRTFRRWIRDAPSLHPLRSVLYKYRNSPDNLQRSIIIAPRVNTRFLLFLWNHYVYGCESILVPLLKQSFHPRSSSHGSFPDRTHFDRKIKHIIRNSRRNSLKSIWSLKDPRIHYVRYAERSIIAIKGTHLLVKKCRYHLPIFRQFYFHLWSEPYRVCSHQLSKNCSSSLGYFLRVRMKPLLVRTKMLDELFITDLITDEFDPIVPIVPIIGLLAREKLCDISGRPISKLYWTSLTDDDILDRFDRIWKNIFHYYSGSLDRDGLYRIKYILSLSCAKTLACKHKSTIRVVRKELGPELFKKYFSKEREFDFPAFSSKAAARSQRERIWHSDIPQINPLANSWQKIQDLK.

This sequence belongs to the intron maturase 2 family. MatK subfamily.

Its subcellular location is the plastid. It localises to the chloroplast. Usually encoded in the trnK tRNA gene intron. Probably assists in splicing its own and other chloroplast group II introns. In Abies bracteata (Bristle-cone fir), this protein is Maturase K.